The chain runs to 160 residues: Transcription elongation factor GreA (160 aa).

Residues 1 to 71 (MAEKTYPMTL…GQISTLETKI (71 aa)) adopt a coiled-coil conformation.

This sequence belongs to the GreA/GreB family.

Necessary for efficient RNA polymerase transcription elongation past template-encoded arresting sites. The arresting sites in DNA have the property of trapping a certain fraction of elongating RNA polymerases that pass through, resulting in locked ternary complexes. Cleavage of the nascent transcript by cleavage factors such as GreA or GreB allows the resumption of elongation from the new 3'terminus. GreA releases sequences of 2 to 3 nucleotides. In Streptococcus pyogenes serotype M3 (strain ATCC BAA-595 / MGAS315), this protein is Transcription elongation factor GreA.